The sequence spans 448 residues: tRNA-2-methylthio-N(6)-dimethylallyladenosine synthase (448 aa).

Positions 3-118 (KKVFIKTFGC…LPELLNARAA (116 aa)) constitute an MTTase N-terminal domain. Positions 12, 49, 81, 155, 159, and 162 each coordinate [4Fe-4S] cluster. Positions 141 to 374 (RVEGASAFVS…QAVINRNILE (234 aa)) constitute a Radical SAM core domain. The region spanning 377 to 440 (QERVGTVQRL…TYTLRGEVVM (64 aa)) is the TRAM domain.

Belongs to the methylthiotransferase family. MiaB subfamily. As to quaternary structure, monomer. [4Fe-4S] cluster is required as a cofactor.

It localises to the cytoplasm. The enzyme catalyses N(6)-dimethylallyladenosine(37) in tRNA + (sulfur carrier)-SH + AH2 + 2 S-adenosyl-L-methionine = 2-methylsulfanyl-N(6)-dimethylallyladenosine(37) in tRNA + (sulfur carrier)-H + 5'-deoxyadenosine + L-methionine + A + S-adenosyl-L-homocysteine + 2 H(+). Functionally, catalyzes the methylthiolation of N6-(dimethylallyl)adenosine (i(6)A), leading to the formation of 2-methylthio-N6-(dimethylallyl)adenosine (ms(2)i(6)A) at position 37 in tRNAs that read codons beginning with uridine. In Acidovorax sp. (strain JS42), this protein is tRNA-2-methylthio-N(6)-dimethylallyladenosine synthase.